The chain runs to 240 residues: Homeobox protein goosecoid (240 aa).

A DNA-binding region (homeobox) is located at residues 146–205 (KRRHRTIFTDEQLEALENLFQETKYPDVGTREQLARKVHLREEKVEVWFKNRRAKWRRQK). Positions 199–240 (AKWRRQKRSSSEESENSQKWNKSTKTTSEKIEEGKSDVDSDS) are disordered. Basic and acidic residues predominate over residues 225–240 (TSEKIEEGKSDVDSDS).

The protein belongs to the paired homeobox family. Bicoid subfamily.

The protein localises to the nucleus. The chain is Homeobox protein goosecoid (gsc) from Danio rerio (Zebrafish).